Reading from the N-terminus, the 251-residue chain is Triosephosphate isomerase (251 aa).

9-11 (NWK) serves as a coordination point for substrate. Histidine 95 (electrophile) is an active-site residue. Residue glutamate 167 is the Proton acceptor of the active site. Residues glycine 173, serine 213, and 234-235 (GG) contribute to the substrate site.

This sequence belongs to the triosephosphate isomerase family. Homodimer.

Its subcellular location is the cytoplasm. The enzyme catalyses D-glyceraldehyde 3-phosphate = dihydroxyacetone phosphate. It functions in the pathway carbohydrate biosynthesis; gluconeogenesis. The protein operates within carbohydrate degradation; glycolysis; D-glyceraldehyde 3-phosphate from glycerone phosphate: step 1/1. Functionally, involved in the gluconeogenesis. Catalyzes stereospecifically the conversion of dihydroxyacetone phosphate (DHAP) to D-glyceraldehyde-3-phosphate (G3P). The protein is Triosephosphate isomerase of Enterococcus faecalis (strain ATCC 700802 / V583).